An 845-amino-acid chain; its full sequence is Extended synaptotagmin-2 (845 aa).

A compositionally biased stretch (gly residues) spans 1–17 (MSSAGGEGPEAGPGRAG). Positions 1–26 (MSSAGGEGPEAGPGRAGGRSEPEAPG) are disordered. Residues 1–27 (MSSAGGEGPEAGPGRAGGRSEPEAPGS) lie on the Cytoplasmic side of the membrane. Residues 28–48 (ALSVDLPGLLGQLARSFALLL) traverse the membrane as a helical segment. Over 49-51 (PVY) the chain is Lumenal. Residues 52-72 (ALGYLGLSFSWVLLALGLLAW) form a helical membrane-spanning segment. Topologically, residues 73-845 (CRRSRGLKAS…EDGTRPQVIT (773 aa)) are cytoplasmic. The SMP-LTD domain occupies 115–294 (DTERAEWLNK…LPNRITVPLV (180 aa)). C2 domains are found at residues 293–413 (LVSE…DEWF) and 442–563 (VLAD…QLSN). 9 residues coordinate Ca(2+): lysine 324, aspartate 325, aspartate 337, aspartate 384, glutamate 385, aspartate 386, aspartate 388, aspartate 390, and aspartate 391. The tract at residues 584–664 (QERPPDYQHS…RDLGRSSSSL (81 aa)) is disordered. Positions 612–628 (SQMSASPGTGGANTAPS) are enriched in polar residues. Residues serine 615 and serine 617 each carry the phosphoserine modification. Threonine 629 carries the phosphothreonine modification. The span at 634 to 645 (VDDKPAMEEKPQ) shows a compositional bias: basic and acidic residues. A phosphoserine mark is found at serine 660, serine 662, serine 663, serine 667, serine 679, serine 682, and serine 685. The 123-residue stretch at 710 to 832 (PLGQIQLTIR…ELAKGWTQWY (123 aa)) folds into the C2 3 domain. The segment at 757 to 764 (KRRSGRRK) is required for phosphatidylinositol 4,5-bisphosphate-dependent location at the cell membrane.

This sequence belongs to the extended synaptotagmin family. As to quaternary structure, homodimer. Interacts with ESYT1 and ESYT3. Interacts with FGFR1 that has been activated by FGF1 binding. Interacts with the AP-2 complex; identified in a complex with the AP-2 complex and FGFR1.

It localises to the cell membrane. Its subcellular location is the endoplasmic reticulum membrane. Functionally, tethers the endoplasmic reticulum to the cell membrane and promotes the formation of appositions between the endoplasmic reticulum and the cell membrane. Binds glycerophospholipids in a barrel-like domain and may play a role in cellular lipid transport. Plays a role in FGF signaling via its role in the rapid internalization of FGFR1 that has been activated by FGF1 binding; this occurs most likely via the AP-2 complex. Promotes the localization of SACM1L at endoplasmic reticulum-plasma membrane contact sites (EPCS). This Mus musculus (Mouse) protein is Extended synaptotagmin-2 (Esyt2).